The following is a 178-amino-acid chain: MSRVGKKIIDIPSDVTVSVEGNTITVKGPKGELSRTMNERMTYKQDESTLEVVRPTDSKDDRTVHGTTRALINNMIQGVKEGYQKTLELVGVGYRAQMQGNDLILNVGYSHPVEIKADDGITFGVEKNTTVTVAGISKEQVGAIASNIRSVRPPEPYKGKGIRYQGEYVRRKEGKTGK.

This sequence belongs to the universal ribosomal protein uL6 family. Part of the 50S ribosomal subunit.

Functionally, this protein binds to the 23S rRNA, and is important in its secondary structure. It is located near the subunit interface in the base of the L7/L12 stalk, and near the tRNA binding site of the peptidyltransferase center. The chain is Large ribosomal subunit protein uL6 from Staphylococcus saprophyticus subsp. saprophyticus (strain ATCC 15305 / DSM 20229 / NCIMB 8711 / NCTC 7292 / S-41).